Here is a 42-residue protein sequence, read N- to C-terminus: MAPGLWEQEQSLSCGTCTYGRTEVNSRILRKLRVGIGYEREL.

This is an uncharacterized protein from Treponema pallidum (strain Nichols).